An 876-amino-acid chain; its full sequence is Alanine--tRNA ligase (876 aa).

Residues H568, H572, C669, and H673 each coordinate Zn(2+).

The protein belongs to the class-II aminoacyl-tRNA synthetase family. Zn(2+) serves as cofactor.

It localises to the cytoplasm. It catalyses the reaction tRNA(Ala) + L-alanine + ATP = L-alanyl-tRNA(Ala) + AMP + diphosphate. In terms of biological role, catalyzes the attachment of alanine to tRNA(Ala) in a two-step reaction: alanine is first activated by ATP to form Ala-AMP and then transferred to the acceptor end of tRNA(Ala). Also edits incorrectly charged Ser-tRNA(Ala) and Gly-tRNA(Ala) via its editing domain. The chain is Alanine--tRNA ligase from Sulfurihydrogenibium sp. (strain YO3AOP1).